Here is a 517-residue protein sequence, read N- to C-terminus: Putative succinate-semialdehyde dehydrogenase [NADP(+)] (517 aa).

NADP(+) contacts are provided by residues 157-158 (WN), 181-184 (KPDS), and 232-233 (GS). The active-site Proton acceptor is Glu254. Leu255 lines the NADP(+) pocket. The active-site Nucleophile is the Cys288. Glu386 lines the NADP(+) pocket.

The protein belongs to the aldehyde dehydrogenase family.

The catalysed reaction is succinate semialdehyde + NADP(+) + H2O = succinate + NADPH + 2 H(+). Its function is as follows. Catalyzes the NADP(+)-dependent oxidation of succinate semialdehyde to succinate. Although it has succinate semialdehyde dehydrogenase activity, is likely to act physiologically on a different aldehyde(s). The sequence is that of Putative succinate-semialdehyde dehydrogenase [NADP(+)] (gabD2) from Mycolicibacterium smegmatis (strain ATCC 700084 / mc(2)155) (Mycobacterium smegmatis).